Reading from the N-terminus, the 107-residue chain is Quaternary ammonium compound-resistance protein QacH (107 aa).

A run of 4 helical transmembrane segments spans residues 1-21 (MPYL…AFLK), 26-46 (FSKL…FYFL), 57-77 (ITYA…SVLI), and 84-104 (LISI…NTFG).

It belongs to the drug/metabolite transporter (DMT) superfamily. Small multidrug resistance (SMR) (TC 2.A.7.1) family.

The protein localises to the cell membrane. In terms of biological role, multidrug exporter. Is implicated for the resistance to bacteriocidal quaternary ammonium compounds. The chain is Quaternary ammonium compound-resistance protein QacH (qacH) from Staphylococcus saprophyticus.